The chain runs to 349 residues: Protein-glutamate methylesterase/protein-glutamine glutaminase (349 aa).

The Response regulatory domain maps to 5–122 (RVLCVDDSAL…REGMLAYSEL (118 aa)). Asp-56 is modified (4-aspartylphosphate). The region spanning 152–344 (LLSSEKLIAI…QRMLAQISSG (193 aa)) is the CheB-type methylesterase domain. Active-site residues include Ser-164, His-190, and Asp-286.

It belongs to the CheB family. In terms of processing, phosphorylated by CheA. Phosphorylation of the N-terminal regulatory domain activates the methylesterase activity.

Its subcellular location is the cytoplasm. The catalysed reaction is [protein]-L-glutamate 5-O-methyl ester + H2O = L-glutamyl-[protein] + methanol + H(+). It catalyses the reaction L-glutaminyl-[protein] + H2O = L-glutamyl-[protein] + NH4(+). Functionally, involved in chemotaxis. Part of a chemotaxis signal transduction system that modulates chemotaxis in response to various stimuli. Catalyzes the demethylation of specific methylglutamate residues introduced into the chemoreceptors (methyl-accepting chemotaxis proteins or MCP) by CheR. Also mediates the irreversible deamidation of specific glutamine residues to glutamic acid. The polypeptide is Protein-glutamate methylesterase/protein-glutamine glutaminase (Yersinia pseudotuberculosis serotype I (strain IP32953)).